Reading from the N-terminus, the 546-residue chain is MLVDELCRLYSIIKTILNYGLSDFVPTHRLIFPLRIGSRFLLRVLNKHSQLTLGERFRLALQELGPIWIKFGQMLSTRRDIFPDSVADQLSILQDRVAPFDGIIAKMCIERAIGNSLETWFKDFQEIPLASASISQVHSARLKKNNKDIVIKIIRPGLLPVIKIDICLMYRLAKWICKFLPEGRKFKFSEVVSEYEKTLFNELNLLKETANTIQLRRNFKKSQILYIPKVYVDFCSENVMVMERIYGIPVYNLVALKKQKTNMKLLAERGIEIFFTQVFRDSFFHGDMHPGNIFISYKHPGNPKYISVDCGIVGSLNKKDKYYLAANFIAFFNHDYRKIAELHLDSGWIPLDTNIEDFECAMRTVFEPIFEQPLEKIPFSKILLYLFNTARYFNMEIQPQLILLQKTLLYIEGIVRQLYPNLNLWKSAQPFLERWMRDQLKLSTTICALKDKIPHWIDKIPELPNLLSHEFKRSCMLQKKIEILIRELRTQRTNHGQALFLFGVGATLVTSSIFLYIQDKYLKIFSIFLFVIGIFIWTIGWKRIIQ.

Residues 123 to 501 (DFQEIPLASA…RTNHGQALFL (379 aa)) enclose the Protein kinase domain. Residues 129 to 137 (LASASISQV) and Lys152 contribute to the ATP site. Asp287 (proton acceptor) is an active-site residue. 2 consecutive transmembrane segments (helical) span residues 497-517 (QALF…FLYI) and 521-541 (YLKI…TIGW).

This sequence belongs to the ABC1 family. UbiB subfamily.

The protein localises to the cell inner membrane. The protein operates within cofactor biosynthesis; ubiquinone biosynthesis [regulation]. In terms of biological role, is probably a protein kinase regulator of UbiI activity which is involved in aerobic coenzyme Q (ubiquinone) biosynthesis. The polypeptide is Probable protein kinase UbiB (Blochmanniella pennsylvanica (strain BPEN)).